The chain runs to 434 residues: CBL-interacting protein kinase 15 (434 aa).

Residues Tyr-12–Phe-267 form the Protein kinase domain. Residues Leu-18–Val-26 and Lys-41 contribute to the ATP site. Asp-135 acts as the Proton acceptor in catalysis. An activation loop region spans residues Asp-153–Glu-182. An NAF domain is found at Arg-298 to Ile-333. The interval Arg-338–Val-367 is PPI.

Belongs to the protein kinase superfamily. CAMK Ser/Thr protein kinase family. SNF1 subfamily. The cofactor is Mn(2+).

The enzyme catalyses L-seryl-[protein] + ATP = O-phospho-L-seryl-[protein] + ADP + H(+). The catalysed reaction is L-threonyl-[protein] + ATP = O-phospho-L-threonyl-[protein] + ADP + H(+). Its function is as follows. Involved in salt stress tolerance. CIPK serine-threonine protein kinases interact with CBL proteins. Binding of a CBL protein to the regulatory NAF domain of CIPK protein lead to the activation of the kinase in a calcium-dependent manner. This chain is CBL-interacting protein kinase 15 (CIPK15), found in Oryza sativa subsp. japonica (Rice).